We begin with the raw amino-acid sequence, 717 residues long: Fatty acid oxidation complex subunit alpha (717 aa).

The segment at 1–190 (MESTSAFNLQ…KAGLVDDVVP (190 aa)) is enoyl-CoA hydratase. Residues 306–717 (RALHSVGVLG…AGNLQAEMTV (412 aa)) form a 3-hydroxyacyl-CoA dehydrogenase region.

The protein in the N-terminal section; belongs to the enoyl-CoA hydratase/isomerase family. In the central section; belongs to the 3-hydroxyacyl-CoA dehydrogenase family. As to quaternary structure, heterotetramer of two alpha chains (FadJ) and two beta chains (FadI).

It localises to the cytoplasm. The catalysed reaction is a (3S)-3-hydroxyacyl-CoA = a (2E)-enoyl-CoA + H2O. The enzyme catalyses a 4-saturated-(3S)-3-hydroxyacyl-CoA = a (3E)-enoyl-CoA + H2O. It catalyses the reaction a (3S)-3-hydroxyacyl-CoA + NAD(+) = a 3-oxoacyl-CoA + NADH + H(+). It carries out the reaction (3S)-3-hydroxybutanoyl-CoA = (3R)-3-hydroxybutanoyl-CoA. Its pathway is lipid metabolism; fatty acid beta-oxidation. Functionally, catalyzes the formation of a hydroxyacyl-CoA by addition of water on enoyl-CoA. Also exhibits 3-hydroxyacyl-CoA epimerase and 3-hydroxyacyl-CoA dehydrogenase activities. This is Fatty acid oxidation complex subunit alpha from Cronobacter sakazakii (strain ATCC BAA-894) (Enterobacter sakazakii).